The sequence spans 210 residues: 7-carboxy-7-deazaguanine synthase (210 aa).

Substrate contacts are provided by residues 25 to 27 and Arg-40; that span reads IQG. The Radical SAM core domain maps to 31–210; sequence HTGTAAYFIR…LQTHKYLNIP (180 aa). 3 residues coordinate [4Fe-4S] cluster: Cys-44, Cys-48, and Cys-51. Substrate is bound at residue Thr-84. S-adenosyl-L-methionine-binding positions include Gly-86 and 127–129; that span reads SPK. Position 210 (Pro-210) interacts with substrate.

It belongs to the radical SAM superfamily. 7-carboxy-7-deazaguanine synthase family. Homodimer. [4Fe-4S] cluster serves as cofactor. Requires S-adenosyl-L-methionine as cofactor. Mg(2+) is required as a cofactor.

It carries out the reaction 6-carboxy-5,6,7,8-tetrahydropterin + H(+) = 7-carboxy-7-deazaguanine + NH4(+). It functions in the pathway purine metabolism; 7-cyano-7-deazaguanine biosynthesis. Functionally, catalyzes the complex heterocyclic radical-mediated conversion of 6-carboxy-5,6,7,8-tetrahydropterin (CPH4) to 7-carboxy-7-deazaguanine (CDG), a step common to the biosynthetic pathways of all 7-deazapurine-containing compounds. This is 7-carboxy-7-deazaguanine synthase from Flavobacterium psychrophilum (strain ATCC 49511 / DSM 21280 / CIP 103535 / JIP02/86).